The primary structure comprises 120 residues: MAWALLLLTLLTQGTGSWAQSALTQPASVSGSPGQSITISCTGTSSDVGGYNYVSWYQQHPGKAPKLMIYEVSNRPSGVSNRFSGSKSGNTASLTISGLQAEDEADYYCSSYTSSSTLHS.

The N-terminal stretch at 1–19 is a signal peptide; sequence MAWALLLLTLLTQGTGSWA. A Pyrrolidone carboxylic acid modification is found at Gln20. The framework-1 stretch occupies residues 20–44; it reads QSALTQPASVSGSPGQSITISCTGT. Residues 20 to 119 enclose the Ig-like domain; it reads QSALTQPASV…SSYTSSSTLH (100 aa). Cys41 and Cys109 are joined by a disulfide. The tract at residues 45-53 is complementarity-determining-1; the sequence is SSDVGGYNY. The interval 54-70 is framework-2; sequence VSWYQQHPGKAPKLMIY. The tract at residues 71-73 is complementarity-determining-2; that stretch reads EVS. The tract at residues 74 to 109 is framework-3; sequence NRPSGVSNRFSGSKSGNTASLTISGLQAEDEADYYC. The interval 110-119 is complementarity-determining-3; sequence SSYTSSSTLH.

Immunoglobulins are composed of two identical heavy chains and two identical light chains; disulfide-linked.

Its subcellular location is the secreted. The protein resides in the cell membrane. V region of the variable domain of immunoglobulin light chains that participates in the antigen recognition. Immunoglobulins, also known as antibodies, are membrane-bound or secreted glycoproteins produced by B lymphocytes. In the recognition phase of humoral immunity, the membrane-bound immunoglobulins serve as receptors which, upon binding of a specific antigen, trigger the clonal expansion and differentiation of B lymphocytes into immunoglobulins-secreting plasma cells. Secreted immunoglobulins mediate the effector phase of humoral immunity, which results in the elimination of bound antigens. The antigen binding site is formed by the variable domain of one heavy chain, together with that of its associated light chain. Thus, each immunoglobulin has two antigen binding sites with remarkable affinity for a particular antigen. The variable domains are assembled by a process called V-(D)-J rearrangement and can then be subjected to somatic hypermutations which, after exposure to antigen and selection, allow affinity maturation for a particular antigen. In Homo sapiens (Human), this protein is Immunoglobulin lambda variable 2-14.